The sequence spans 396 residues: Putative nickel insertion protein (396 aa).

It belongs to the LarC family.

In Methanosarcina acetivorans (strain ATCC 35395 / DSM 2834 / JCM 12185 / C2A), this protein is Putative nickel insertion protein.